We begin with the raw amino-acid sequence, 142 residues long: Large ribosomal subunit protein uL11 (142 aa).

It belongs to the universal ribosomal protein uL11 family. Part of the ribosomal stalk of the 50S ribosomal subunit. Interacts with L10 and the large rRNA to form the base of the stalk. L10 forms an elongated spine to which L12 dimers bind in a sequential fashion forming a multimeric L10(L12)X complex. In terms of processing, one or more lysine residues are methylated.

Its function is as follows. Forms part of the ribosomal stalk which helps the ribosome interact with GTP-bound translation factors. In Vibrio vulnificus (strain CMCP6), this protein is Large ribosomal subunit protein uL11.